Reading from the N-terminus, the 665-residue chain is Pre-mRNA-processing factor 39 (665 aa).

Residues 1–11 (MQNSHMEEYRN) are compositionally biased toward basic and acidic residues. The interval 1 to 28 (MQNSHMEEYRNSDNGSTGNSSEVAVVEH) is disordered. A compositionally biased stretch (polar residues) spans 12-22 (SDNGSTGNSSE). Position 44 is a phosphoserine (Ser-44). 7 HAT repeats span residues 107-139 (NHLMAARKAFDKFFVHYPYCYGYWKKYADLEKR), 141-173 (DNIKQSDEVYRRGLQAIPLSVDLWIHYINFLKE), 181-216 (ETNTTIRGTFEHAVLAAGTDFRSDKLWEMYINWENE), 218-251 (GNLREVTAVYDRILGIPTQLYSHHFQRFKEHVQN), 331-363 (FEEGIKRPYFHVKPLEKAQPKKNWKEYLEFEIE), 365-397 (GTHERVVVLFERCVISCALYEEFWIKYAKYMEN), and 402-434 (GVRHVFSRACTVHLPKKPMAHMLWAAFEEQQGN). Basic and acidic residues predominate over residues 599-622 (QDTLKRKAENGSEEPEEKKAHTED). Residues 599–625 (QDTLKRKAENGSEEPEEKKAHTEDLSS) form a disordered region.

Belongs to the PRP39 family.

It is found in the nucleus. Functionally, involved in pre-mRNA splicing. The sequence is that of Pre-mRNA-processing factor 39 (Prpf39) from Mus musculus (Mouse).